The following is a 415-amino-acid chain: MNEVVAKGKKAKEIARELVLKSTNQKNEALAAIADQMIVETAYILEENKRDIEEGKAKGFSDSLLDRLMLNEQRIIDMAEGIKQLIELRDPVGECVSAWERPNGLSIQEMRVPLGVVGMIYEARPNVTVDAATICLKTGNAVILRGSSSAINSNKAIVSVIHRALKQTSLPPESVQLIEDTTRDSAKQLFTLNEYLDVLIPRGGKQLIDTVVREASVPVLETGAGNCHIFIDETADKQMAFNIIINAKTQRPSVCNAIETIVLHEKWAQQFGSELFSSLKERGVELRGDSKSLAIDSSIALASEEDWETEFLSLTLAVKVVSTTEEAIHHINTYGSMHSEAIITENEENVSKFFTSVDAAALYHNASTRFTDGSEFGFGAEIGISTQKLHVRGPMGLPALTSTKYVIRGNGQIRR.

Belongs to the gamma-glutamyl phosphate reductase family.

It localises to the cytoplasm. The catalysed reaction is L-glutamate 5-semialdehyde + phosphate + NADP(+) = L-glutamyl 5-phosphate + NADPH + H(+). It participates in amino-acid biosynthesis; L-proline biosynthesis; L-glutamate 5-semialdehyde from L-glutamate: step 2/2. Functionally, catalyzes the NADPH-dependent reduction of L-glutamate 5-phosphate into L-glutamate 5-semialdehyde and phosphate. The product spontaneously undergoes cyclization to form 1-pyrroline-5-carboxylate. In Bacillus mycoides (strain KBAB4) (Bacillus weihenstephanensis), this protein is Gamma-glutamyl phosphate reductase.